Here is a 309-residue protein sequence, read N- to C-terminus: Porphobilinogen deaminase (309 aa).

At C241 the chain carries S-(dipyrrolylmethanemethyl)cysteine.

The protein belongs to the HMBS family. In terms of assembly, monomer. It depends on dipyrromethane as a cofactor.

It carries out the reaction 4 porphobilinogen + H2O = hydroxymethylbilane + 4 NH4(+). It functions in the pathway porphyrin-containing compound metabolism; protoporphyrin-IX biosynthesis; coproporphyrinogen-III from 5-aminolevulinate: step 2/4. Functionally, tetrapolymerization of the monopyrrole PBG into the hydroxymethylbilane pre-uroporphyrinogen in several discrete steps. This chain is Porphobilinogen deaminase, found in Bacillus anthracis (strain A0248).